The chain runs to 495 residues: Glutamyl-tRNA(Gln) amidotransferase subunit A (495 aa).

Residues lysine 75 and serine 150 each act as charge relay system in the active site. The Acyl-ester intermediate role is filled by serine 174.

This sequence belongs to the amidase family. GatA subfamily. As to quaternary structure, heterotrimer of A, B and C subunits.

It carries out the reaction L-glutamyl-tRNA(Gln) + L-glutamine + ATP + H2O = L-glutaminyl-tRNA(Gln) + L-glutamate + ADP + phosphate + H(+). Functionally, allows the formation of correctly charged Gln-tRNA(Gln) through the transamidation of misacylated Glu-tRNA(Gln) in organisms which lack glutaminyl-tRNA synthetase. The reaction takes place in the presence of glutamine and ATP through an activated gamma-phospho-Glu-tRNA(Gln). This is Glutamyl-tRNA(Gln) amidotransferase subunit A from Paraburkholderia phytofirmans (strain DSM 17436 / LMG 22146 / PsJN) (Burkholderia phytofirmans).